The chain runs to 140 residues: Alkaline proteinase inhibitor (140 aa).

Positions 1–25 (MPSSVQATAGLLATLMMFCGEVAMA) are cleaved as a signal peptide.

This sequence belongs to the protease inhibitor I38 family.

The protein resides in the periplasm. Inhibitor of the alkaline protease. In Pseudomonas brassicacearum (strain NFM421), this protein is Alkaline proteinase inhibitor (inh).